Consider the following 353-residue polypeptide: Mitogen-activated protein kinase FUS3 (353 aa).

The region spanning 13–309 is the Protein kinase domain; it reads FQLKSLLGEG…AKEALEHPYL (297 aa). ATP is bound by residues 19 to 27 and Lys-42; that span reads LGEGAYGVV. The active-site Proton acceptor is Asp-137. Thr-180 is modified (phosphothreonine). The short motif at 180 to 182 is the TXY element; sequence TEY. Tyr-182 carries the post-translational modification Phosphotyrosine. Residue Lys-345 forms a Glycyl lysine isopeptide (Lys-Gly) (interchain with G-Cter in ubiquitin) linkage.

This sequence belongs to the protein kinase superfamily. CMGC Ser/Thr protein kinase family. MAP kinase subfamily. In the nucleus, FUS3 forms a complex with DIG1, DIG2 and STE12. The interaction of FUS3 with STE12 depends on the presence of both DIG1 and DIG2. STE12 is lost from FUS3/DIG1/DIG2 complex after pheromone treatment. During its activation and phosphorylation, FUS3 forms a membrane-associated complex with the scaffold protein STE5, the MAPKK STE7, the MAPKKK STE11, and the G-protein beta subunit GBB/STE4; interacting directly with STE7 and STE5. It depends on Mg(2+) as a cofactor. In terms of processing, dually phosphorylated on Thr-180 and Tyr-182 by STE7 in response to pheromone induction, which activates the enzyme. Activated FUS3 initiates a feedback signal, down-regulating phosphorylation of both, FUS3 and KSS1.

The protein localises to the nucleus. Its subcellular location is the cytoplasm. The protein resides in the periplasm. It carries out the reaction L-seryl-[protein] + ATP = O-phospho-L-seryl-[protein] + ADP + H(+). The catalysed reaction is L-threonyl-[protein] + ATP = O-phospho-L-threonyl-[protein] + ADP + H(+). With respect to regulation, activated by tyrosine and threonine phosphorylation after pheromone treatment. Its function is as follows. Together with closely related KSS1, FUS3 is the final kinase in the signal transduction cascade regulating activation/repression of the mating and filamentation pathways, induced by pheromone and nitrogen/carbon limitation, respectively. Phosphorylated FUS3 activates the mating but suppresses the filamentation pathway, whereas activated KSS1 activates both pathways. Pheromone-activated FUS3 functions by inhibiting the binding of the transcriptional activator STE12 to filamentation specific genes while inducing its binding to and activity at mating specific genes. Non-activated FUS3 has a repressive effect on STE12 transcriptional activity. KSS1 can partially compensate for the lack of FUS3 but mating efficiency is reduced and the filamentation program is partially activated upon pheromone signaling. FUS3 phosphorylates STE7, STE5, FAR1, DIG1, DIG2 and STE12. In Saccharomyces cerevisiae (strain ATCC 204508 / S288c) (Baker's yeast), this protein is Mitogen-activated protein kinase FUS3 (FUS3).